The sequence spans 171 residues: Peptide deformylase (171 aa).

Fe cation is bound by residues Cys91 and His133. The active site involves Glu134. His137 lines the Fe cation pocket.

It belongs to the polypeptide deformylase family. Requires Fe(2+) as cofactor.

It carries out the reaction N-terminal N-formyl-L-methionyl-[peptide] + H2O = N-terminal L-methionyl-[peptide] + formate. Removes the formyl group from the N-terminal Met of newly synthesized proteins. Requires at least a dipeptide for an efficient rate of reaction. N-terminal L-methionine is a prerequisite for activity but the enzyme has broad specificity at other positions. In Hamiltonella defensa subsp. Acyrthosiphon pisum (strain 5AT), this protein is Peptide deformylase.